Consider the following 204-residue polypeptide: RNA-free ribonuclease P (204 aa).

It belongs to the HARP family.

It catalyses the reaction Endonucleolytic cleavage of RNA, removing 5'-extranucleotides from tRNA precursor.. Functionally, RNA-free RNase P that catalyzes the removal of the 5'-leader sequence from pre-tRNA to produce the mature 5'-terminus. This chain is RNA-free ribonuclease P, found in Ignicoccus hospitalis (strain KIN4/I / DSM 18386 / JCM 14125).